The following is a 378-amino-acid chain: Chaperone protein DnaJ (378 aa).

Positions 5–70 constitute a J domain; it reads DYYESLGVAK…QKRAAYDQYG (66 aa). The CR-type zinc-finger motif lies at 133–211; it reads GVTKEIRIPA…CHGHGRVEKS (79 aa). Residues C146, C149, C163, C166, C185, C188, C199, and C202 each contribute to the Zn(2+) site. 4 CXXCXGXG motif repeats span residues 146-153, 163-170, 185-192, and 199-206; these read CDVCHGNG, CPTCHGNG, CPHCHGRG, and CVKCHGHG.

It belongs to the DnaJ family. Homodimer. The cofactor is Zn(2+).

It is found in the cytoplasm. Functionally, participates actively in the response to hyperosmotic and heat shock by preventing the aggregation of stress-denatured proteins and by disaggregating proteins, also in an autonomous, DnaK-independent fashion. Unfolded proteins bind initially to DnaJ; upon interaction with the DnaJ-bound protein, DnaK hydrolyzes its bound ATP, resulting in the formation of a stable complex. GrpE releases ADP from DnaK; ATP binding to DnaK triggers the release of the substrate protein, thus completing the reaction cycle. Several rounds of ATP-dependent interactions between DnaJ, DnaK and GrpE are required for fully efficient folding. Also involved, together with DnaK and GrpE, in the DNA replication of plasmids through activation of initiation proteins. The sequence is that of Chaperone protein DnaJ from Pectobacterium carotovorum subsp. carotovorum (strain PC1).